A 562-amino-acid chain; its full sequence is Formate--tetrahydrofolate ligase (562 aa).

71-78 is an ATP binding site; sequence TPAGEGKS.

This sequence belongs to the formate--tetrahydrofolate ligase family.

It catalyses the reaction (6S)-5,6,7,8-tetrahydrofolate + formate + ATP = (6R)-10-formyltetrahydrofolate + ADP + phosphate. It participates in one-carbon metabolism; tetrahydrofolate interconversion. In Bacillus anthracis (strain A0248), this protein is Formate--tetrahydrofolate ligase.